Consider the following 154-residue polypeptide: Fucose mutarotase (154 aa).

Histidine 24 (proton donor) is an active-site residue. Aspartate 32 provides a ligand contact to substrate. Residue aspartate 69 is part of the active site. Substrate contacts are provided by methionine 79, tyrosine 120, tyrosine 138, and asparagine 140. Tyrosine 120 is an active-site residue.

It belongs to the RbsD / FucU family. Mainly homodimer, but also exists as homotetramer, homooctamer, and homodecamer. The homodimeric form seems catalytically inactive.

The enzyme catalyses alpha-L-fucose = beta-L-fucose. The protein operates within carbohydrate metabolism; L-fucose metabolism. In terms of biological role, involved in the interconversion between alpha- and beta-L-fucoses. L-Fucose (6-deoxy-L-galactose) exists as alpha-L-fucose (29.5%) and beta-L-fucose (70.5%), the beta-form is metabolized through the salvage pathway. GDP-L-fucose formed either by the de novo or salvage pathways is transported into the endoplasmic reticulum, where it serves as a substrate for N- and O-glycosylations by fucosyltransferases. Fucosylated structures expressed on cell surfaces or secreted in biological fluids are believed to play a critical role in cell-cell adhesion and recognition processes. This is Fucose mutarotase (FUOM) from Homo sapiens (Human).